A 347-amino-acid chain; its full sequence is Dihydroorotase (347 aa).

2 residues coordinate Zn(2+): H14 and H16. Residues 16–18 (HLR) and N42 each bind substrate. The Zn(2+) site is built by K100, H137, and H175. K100 carries the N6-carboxylysine modification. H137 is a substrate binding site. Residue L220 participates in substrate binding. D248 serves as a coordination point for Zn(2+). Residue D248 is part of the active site. Substrate-binding residues include H252 and A264.

It belongs to the metallo-dependent hydrolases superfamily. DHOase family. Class II DHOase subfamily. In terms of assembly, homodimer. Zn(2+) is required as a cofactor.

The enzyme catalyses (S)-dihydroorotate + H2O = N-carbamoyl-L-aspartate + H(+). The protein operates within pyrimidine metabolism; UMP biosynthesis via de novo pathway; (S)-dihydroorotate from bicarbonate: step 3/3. Catalyzes the reversible cyclization of carbamoyl aspartate to dihydroorotate. The polypeptide is Dihydroorotase (Pseudomonas syringae pv. syringae (strain B728a)).